We begin with the raw amino-acid sequence, 249 residues long: uncharacterized protein (249 aa).

The 68-residue stretch at 4 to 71 folds into the S4 RNA-binding domain; the sequence is VRINKFLSEA…RKRYIILNKP (68 aa). D106 serves as the catalytic Nucleophile.

It belongs to the pseudouridine synthase RsuA family.

It catalyses the reaction a uridine in RNA = a pseudouridine in RNA. This is an uncharacterized protein from Aquifex aeolicus (strain VF5).